The primary structure comprises 330 residues: Succinylglutamate desuccinylase (330 aa).

3 residues coordinate Zn(2+): histidine 53, glutamate 56, and histidine 147. Glutamate 210 is an active-site residue.

This sequence belongs to the AspA/AstE family. Succinylglutamate desuccinylase subfamily. Requires Zn(2+) as cofactor.

The catalysed reaction is N-succinyl-L-glutamate + H2O = L-glutamate + succinate. It participates in amino-acid degradation; L-arginine degradation via AST pathway; L-glutamate and succinate from L-arginine: step 5/5. In terms of biological role, transforms N(2)-succinylglutamate into succinate and glutamate. In Yersinia pseudotuberculosis serotype O:1b (strain IP 31758), this protein is Succinylglutamate desuccinylase.